The sequence spans 421 residues: Gamma-glutamyl phosphate reductase (421 aa).

It belongs to the gamma-glutamyl phosphate reductase family.

The protein resides in the cytoplasm. It carries out the reaction L-glutamate 5-semialdehyde + phosphate + NADP(+) = L-glutamyl 5-phosphate + NADPH + H(+). Its pathway is amino-acid biosynthesis; L-proline biosynthesis; L-glutamate 5-semialdehyde from L-glutamate: step 2/2. In terms of biological role, catalyzes the NADPH-dependent reduction of L-glutamate 5-phosphate into L-glutamate 5-semialdehyde and phosphate. The product spontaneously undergoes cyclization to form 1-pyrroline-5-carboxylate. The protein is Gamma-glutamyl phosphate reductase of Leifsonia xyli subsp. xyli (strain CTCB07).